Consider the following 163-residue polypeptide: IQSTSMDQGILTEDSMNSFIRTLIQAGIWKNKVPKQTARTKDGMQTTVKKTEAEADAMASQDTRLGFQPIVSVDAELLRQQRRFSSPRVLLSENTPLEPPPLYLTEEPVVLNRTSRRKREGKSHRGEYSVCDSESRWVTDKSSAVDIRGHQVTVLGEIRMGPS.

Positions 1–3 (IQS) are cleaved as a signal peptide. The propeptide occupies 4–119 (TSMDQGILTE…VLNRTSRRKR (116 aa)). Residue Asn112 is glycosylated (N-linked (GlcNAc...) asparagine).

This sequence belongs to the NGF-beta family.

The protein resides in the secreted. In terms of biological role, seems to promote the survival of visceral and proprioceptive sensory neurons. The sequence is that of Neurotrophin-3 (NTF3) from Chilabothrus striatus (Haitian boa constrictor).